Here is a 1342-residue protein sequence, read N- to C-terminus: DNA-directed RNA polymerase subunit beta (1342 aa).

The protein belongs to the RNA polymerase beta chain family. In terms of assembly, the RNAP catalytic core consists of 2 alpha, 1 beta, 1 beta' and 1 omega subunit. When a sigma factor is associated with the core the holoenzyme is formed, which can initiate transcription.

The catalysed reaction is RNA(n) + a ribonucleoside 5'-triphosphate = RNA(n+1) + diphosphate. DNA-dependent RNA polymerase catalyzes the transcription of DNA into RNA using the four ribonucleoside triphosphates as substrates. The chain is DNA-directed RNA polymerase subunit beta from Actinobacillus pleuropneumoniae serotype 5b (strain L20).